A 262-amino-acid polypeptide reads, in one-letter code: Tetratricopeptide repeat protein 33 (262 aa).

TPR repeat units lie at residues serine 59–aspartate 92, alanine 93–serine 126, and tryptophan 127–asparagine 160. Serine 197 is subject to Phosphoserine. Residue threonine 251 is modified to Phosphothreonine.

This chain is Tetratricopeptide repeat protein 33 (TTC33), found in Homo sapiens (Human).